Here is a 321-residue protein sequence, read N- to C-terminus: Cytochrome c biogenesis protein CcsA (321 aa).

The next 8 membrane-spanning stretches (helical) occupy residues 17 to 37, 43 to 63, 71 to 91, 98 to 118, 143 to 163, 225 to 245, 258 to 275, and 286 to 306; these read IVSI…IVGL, KGMI…WIYS, LYES…VPKI, LSAI…SGLL, MVLS…LLVI, VISL…VWAN, ETWA…LHTR, and AIVA…VNLL.

This sequence belongs to the CcmF/CycK/Ccl1/NrfE/CcsA family. As to quaternary structure, may interact with Ccs1.

It localises to the plastid. It is found in the chloroplast thylakoid membrane. In terms of biological role, required during biogenesis of c-type cytochromes (cytochrome c6 and cytochrome f) at the step of heme attachment. This Platanus occidentalis (Sycamore) protein is Cytochrome c biogenesis protein CcsA.